The sequence spans 397 residues: Lysophospholipid transporter LplT (397 aa).

Topologically, residues 1 to 17 (MSESVHTNTSLWSKGMK) are periplasmic. A helical membrane pass occupies residues 18–38 (AVIVAQFLSAFGDNALLFATL). At 39-52 (ALLKAQFYPEWSQP) the chain is on the cytoplasmic side. The helical transmembrane segment at 53–73 (ILQMVFVGAYILFAPFVGQVA) threads the bilayer. The Periplasmic segment spans residues 74–90 (DSFAKGRVMMFANGLKL). A helical transmembrane segment spans residues 91 to 111 (LGAASICFGINPFLGYTLVGV). Over 112-144 (GAAAYSPAKYGILGELTTGSKLVKANGLMEAST) the chain is Cytoplasmic. Residues 145-165 (IAAILLGSVAGGVLADWHILV) traverse the membrane as a helical segment. Ala166 is a topological domain (periplasmic). The chain crosses the membrane as a helical span at residues 167-187 (LAACALAYGGAVVANIYIPKL). Topologically, residues 188-226 (AAARPGQSWNLISMTRSFLNACTSLWRNGETRFSLVGTS) are cytoplasmic. A helical membrane pass occupies residues 227–247 (LFWGAGVTLRFLLVLWVPVAL). Topologically, residues 248-256 (GITDNATPT) are periplasmic. A helical membrane pass occupies residues 257 to 277 (YLNAMVAIGIVVGAGAAAKLV). The Cytoplasmic portion of the chain corresponds to 278 to 280 (TLE). The chain crosses the membrane as a helical span at residues 281 to 301 (TVSRCMPAGILIGVVVLIFSL). The Periplasmic segment spans residues 302-304 (QHE). The chain crosses the membrane as a helical span at residues 305–325 (LLPAYALLMLIGVLGGFFVVP). Over 326 to 343 (LNALLQERGKKSVGAGNA) the chain is Cytoplasmic. The helical transmembrane segment at 344 to 364 (IAVQNLGENSAMLLMLGIYSL) threads the bilayer. The Periplasmic segment spans residues 365–366 (AV). The helical transmembrane segment at 367–387 (MVGIPVVPIGIGFGALFALAI) threads the bilayer. The Cytoplasmic segment spans residues 388–397 (TALWIWQRRH).

It belongs to the major facilitator superfamily. LplT (TC 2.A.1.42) family.

It localises to the cell inner membrane. Catalyzes the facilitated diffusion of 2-acyl-glycero-3-phosphoethanolamine (2-acyl-GPE) into the cell. This is Lysophospholipid transporter LplT from Escherichia coli O6:K15:H31 (strain 536 / UPEC).